We begin with the raw amino-acid sequence, 486 residues long: PTS system N-acetylmuramic acid-specific EIIBC component (486 aa).

In terms of domain architecture, PTS EIIB type-1 spans 1 to 89; it reads MAKITQTMIS…NKLIESVING (89 aa). C28 functions as the Phosphocysteine intermediate; for EIIB activity in the catalytic mechanism. Residues 127–486 enclose the PTS EIIC type-1 domain; sequence SKFATIFTPL…FFGSKDVDLS (360 aa). A run of 10 helical transmembrane segments spans residues 129–149, 170–190, 196–216, 230–250, 268–288, 312–332, 347–367, 381–401, 411–431, and 453–473; these read FATIFTPLIPGFIAAGLLLGF, LIAYMKVFGKGLFAFLSILIG, AFGGSGVNGAILASLFVLGYN, FFGYTIDPRGNIIGVLLAAII, MILTSVVTLLIMGVITFVVIM, AAILAGLFLISVVFGIHQGFV, LFPILAMAGGGQVGASLALYF, GAIIPGILGIGEPLIYGVTLP, IGGAAGGFFIGLVSYLGLPVG, and IFAGMAVFVVGLLISYVVGFL.

The protein resides in the cell inner membrane. The enzyme catalyses N-acetyl-beta-D-muramate(out) + N(pros)-phospho-L-histidyl-[protein] = N-acetyl-beta-D-muramate 6-phosphate(in) + L-histidyl-[protein]. In terms of biological role, the phosphoenolpyruvate-dependent sugar phosphotransferase system (sugar PTS), a major carbohydrate active transport system, catalyzes the phosphorylation of incoming sugar substrates concomitantly with their translocation across the cell membrane. This system is involved in N-acetylmuramic acid (MurNAc) transport, yielding cytoplasmic MurNAc-6-P. Is also able to take up anhydro-N-acetylmuramic acid (anhMurNAc), but cannot phosphorylate the carbon 6, probably because of the 1,6-anhydro ring. The sequence is that of PTS system N-acetylmuramic acid-specific EIIBC component (murP) from Vibrio vulnificus (strain CMCP6).